A 487-amino-acid chain; its full sequence is Vacuolar protein sorting-associated protein 30 (487 aa).

The disordered stretch occupies residues 33 to 129 (PQTLKKSSVP…DNPDAPMGSE (97 aa)). Over residues 52 to 62 (QSRKSIYDRVS) the composition is skewed to basic and acidic residues. Polar residues predominate over residues 81-94 (SSMSFVLLSESQMA). Positions 152–282 (VECTEMLVEG…DSQLLEKLQR (131 aa)) form a coiled coil. The interval 283-480 (SNVYNDTFCI…LAHASNVTSN (198 aa)) is BARA. The required for membrane-association, autophagic function during starvation and normal autophagosome morphology stretch occupies residues 456-481 (WTKACKLTLTCCKFLLAHASNVTSNA).

Belongs to the beclin family. As to quaternary structure, component of the autophagy-specific VPS34 PI3-kinase complex I; and of the VPS34 PI3-kinase complex II.

Its subcellular location is the endosome membrane. It localises to the vacuole membrane. The protein localises to the preautophagosomal structure membrane. In terms of biological role, required for cytoplasm to vacuole transport (Cvt), autophagy, nucleophagy, and mitophagy, as a part of the autophagy-specific VPS34 PI3-kinase complex I. This complex is essential to recruit the ATG8-phosphatidylinositol conjugate and the ATG12-ATG5 conjugate to the pre-autophagosomal structure. Also involved in endosome-to-Golgi retrograde transport as part of the VPS34 PI3-kinase complex II. Autophagy is required for proper vegetative growth, asexual/sexual reproduction, and full virulence. Autophagy is particularly involved in the biosynthesis of deoxynivalenol (DON), an important virulence determinant. This Gibberella zeae (strain ATCC MYA-4620 / CBS 123657 / FGSC 9075 / NRRL 31084 / PH-1) (Wheat head blight fungus) protein is Vacuolar protein sorting-associated protein 30.